The primary structure comprises 156 residues: ATP synthase subunit b (156 aa).

The chain crosses the membrane as a helical span at residues 11–31; that stretch reads AIAFVLFVLFCMKYVWPPLMA.

The protein belongs to the ATPase B chain family. F-type ATPases have 2 components, F(1) - the catalytic core - and F(0) - the membrane proton channel. F(1) has five subunits: alpha(3), beta(3), gamma(1), delta(1), epsilon(1). F(0) has three main subunits: a(1), b(2) and c(10-14). The alpha and beta chains form an alternating ring which encloses part of the gamma chain. F(1) is attached to F(0) by a central stalk formed by the gamma and epsilon chains, while a peripheral stalk is formed by the delta and b chains.

The protein resides in the cell inner membrane. F(1)F(0) ATP synthase produces ATP from ADP in the presence of a proton or sodium gradient. F-type ATPases consist of two structural domains, F(1) containing the extramembraneous catalytic core and F(0) containing the membrane proton channel, linked together by a central stalk and a peripheral stalk. During catalysis, ATP synthesis in the catalytic domain of F(1) is coupled via a rotary mechanism of the central stalk subunits to proton translocation. Functionally, component of the F(0) channel, it forms part of the peripheral stalk, linking F(1) to F(0). The chain is ATP synthase subunit b from Citrobacter koseri (strain ATCC BAA-895 / CDC 4225-83 / SGSC4696).